The following is a 654-amino-acid chain: Fructose-1,6-bisphosphatase class 3 (654 aa).

Residues 288–307 are disordered; the sequence is NPAFKPKKRPDKHERLTQRE. Basic and acidic residues predominate over residues 298–307; that stretch reads DKHERLTQRE.

It belongs to the FBPase class 3 family. Requires Mn(2+) as cofactor.

It catalyses the reaction beta-D-fructose 1,6-bisphosphate + H2O = beta-D-fructose 6-phosphate + phosphate. Its pathway is carbohydrate biosynthesis; gluconeogenesis. The sequence is that of Fructose-1,6-bisphosphatase class 3 from Staphylococcus aureus (strain Mu3 / ATCC 700698).